A 177-amino-acid chain; its full sequence is Coatomer subunit zeta-3 (177 aa).

The protein belongs to the adaptor complexes small subunit family. Oligomeric complex that consists of at least the alpha, beta, beta', gamma, delta, epsilon and zeta subunits.

Its subcellular location is the cytoplasm. The protein resides in the golgi apparatus membrane. It localises to the cytoplasmic vesicle. The protein localises to the COPI-coated vesicle membrane. The coatomer is a cytosolic protein complex that binds to dilysine motifs and reversibly associates with Golgi non-clathrin-coated vesicles, which further mediate biosynthetic protein transport from the ER, via the Golgi up to the trans Golgi network. Coatomer complex is required for budding from Golgi membranes, and is essential for the retrograde Golgi-to-ER transport of dilysine-tagged proteins. The zeta subunit may be involved in regulating the coat assembly and, hence, the rate of biosynthetic protein transport due to its association-dissociation properties with the coatomer complex. This is Coatomer subunit zeta-3 from Oryza sativa subsp. japonica (Rice).